The primary structure comprises 380 residues: Histidinol-phosphate aminotransferase (380 aa).

K232 carries the post-translational modification N6-(pyridoxal phosphate)lysine.

It belongs to the class-II pyridoxal-phosphate-dependent aminotransferase family. Histidinol-phosphate aminotransferase subfamily. Homodimer. Requires pyridoxal 5'-phosphate as cofactor.

The catalysed reaction is L-histidinol phosphate + 2-oxoglutarate = 3-(imidazol-4-yl)-2-oxopropyl phosphate + L-glutamate. The protein operates within amino-acid biosynthesis; L-histidine biosynthesis; L-histidine from 5-phospho-alpha-D-ribose 1-diphosphate: step 7/9. This Mycobacterium bovis (strain BCG / Pasteur 1173P2) protein is Histidinol-phosphate aminotransferase.